A 105-amino-acid polypeptide reads, in one-letter code: MSALTRLASFARVGGRLFRSGCARTAGDGGVRHAGGGVHIEPRYRQFPQLTRSQVFQSEFFSGLMWFWILWRFWHDSEEVLGHFPYPDPSQWTDEELGIPPDDED.

The N-terminal 33 residues, methionine 1–histidine 33, are a transit peptide targeting the mitochondrion. The disordered stretch occupies residues proline 85–aspartate 105. The segment covering threonine 93 to aspartate 105 has biased composition (acidic residues).

This sequence belongs to the complex I NDUFB2 subunit family. As to quaternary structure, complex I is composed of 45 different subunits.

It localises to the mitochondrion inner membrane. Accessory subunit of the mitochondrial membrane respiratory chain NADH dehydrogenase (Complex I), that is believed not to be involved in catalysis. Complex I functions in the transfer of electrons from NADH to the respiratory chain. The immediate electron acceptor for the enzyme is believed to be ubiquinone. The chain is NADH dehydrogenase [ubiquinone] 1 beta subcomplex subunit 2, mitochondrial (NDUFB2) from Homo sapiens (Human).